Here is a 64-residue protein sequence, read N- to C-terminus: MRLHHLLLVLLFLVLSAGSGFTQVVRNPQSCRWNMGVCIPISCPGNMRQIGTCFGPRVPCCRRW.

The signal sequence occupies residues 1-22 (MRLHHLLLVLLFLVLSAGSGFT). Q23 carries the post-translational modification Pyrrolidone carboxylic acid. 3 cysteine pairs are disulfide-bonded: C31-C60, C38-C53, and C43-C61.

This sequence belongs to the beta-defensin family. As to expression, neutrophilic granules. Alveolar macrophages.

The protein resides in the secreted. Functionally, has bactericidal activity. Active against E.coli ML35 but not against S.aureus 502A. The polypeptide is Beta-defensin 5 (DEFB5) (Bos taurus (Bovine)).